We begin with the raw amino-acid sequence, 92 residues long: Large ribosomal subunit protein bL27 (92 aa).

Residues 1–9 (MLVMNLQYF) constitute a propeptide that is removed on maturation.

Belongs to the bacterial ribosomal protein bL27 family. The N-terminus is cleaved by ribosomal processing cysteine protease Prp.

The protein is Large ribosomal subunit protein bL27 of Heliobacterium modesticaldum (strain ATCC 51547 / Ice1).